The primary structure comprises 932 residues: Isoleucine--tRNA ligase (932 aa).

Positions 57–67 (PYANGNIHLGH) match the 'HIGH' region motif. E552 lines the L-isoleucyl-5'-AMP pocket. Residues 593–597 (KMSKS) carry the 'KMSKS' region motif. An ATP-binding site is contributed by K596. Positions 889, 892, 911, and 914 each coordinate Zn(2+).

It belongs to the class-I aminoacyl-tRNA synthetase family. IleS type 1 subfamily. As to quaternary structure, monomer. The cofactor is Zn(2+).

Its subcellular location is the cytoplasm. The catalysed reaction is tRNA(Ile) + L-isoleucine + ATP = L-isoleucyl-tRNA(Ile) + AMP + diphosphate. In terms of biological role, catalyzes the attachment of isoleucine to tRNA(Ile). As IleRS can inadvertently accommodate and process structurally similar amino acids such as valine, to avoid such errors it has two additional distinct tRNA(Ile)-dependent editing activities. One activity is designated as 'pretransfer' editing and involves the hydrolysis of activated Val-AMP. The other activity is designated 'posttransfer' editing and involves deacylation of mischarged Val-tRNA(Ile). In Lactococcus lactis subsp. lactis (strain IL1403) (Streptococcus lactis), this protein is Isoleucine--tRNA ligase.